Reading from the N-terminus, the 464-residue chain is NADH-quinone oxidoreductase subunit N (464 aa).

13 consecutive transmembrane segments (helical) span residues 5 to 25 (MLLA…VLFL), 31 to 51 (LLSA…PASL), 63 to 83 (LFAR…CLLS), 96 to 116 (EYAA…ASTS), 117 to 137 (LVSL…LIAV), 152 to 172 (LLPG…VYAA), 188 to 208 (GAPM…AAAF), 242 to 262 (VFAV…RPLL), 286 to 303 (MLAY…LAVL), 312 to 332 (AGLF…GLLA), 358 to 378 (AVLL…AGFM), 393 to 415 (VGLV…RPVL), and 436 to 456 (LIFV…GPFF).

This sequence belongs to the complex I subunit 2 family. As to quaternary structure, NDH-1 is composed of 14 different subunits. Subunits NuoA, H, J, K, L, M, N constitute the membrane sector of the complex.

The protein resides in the cell inner membrane. The catalysed reaction is a quinone + NADH + 5 H(+)(in) = a quinol + NAD(+) + 4 H(+)(out). Its function is as follows. NDH-1 shuttles electrons from NADH, via FMN and iron-sulfur (Fe-S) centers, to quinones in the respiratory chain. The immediate electron acceptor for the enzyme in this species is believed to be ubiquinone. Couples the redox reaction to proton translocation (for every two electrons transferred, four hydrogen ions are translocated across the cytoplasmic membrane), and thus conserves the redox energy in a proton gradient. This chain is NADH-quinone oxidoreductase subunit N, found in Syntrophotalea carbinolica (strain DSM 2380 / NBRC 103641 / GraBd1) (Pelobacter carbinolicus).